We begin with the raw amino-acid sequence, 445 residues long: Tubby-like F-box protein 8 (445 aa).

The region spanning 56-102 is the F-box domain; the sequence is ESRWASLPPELLRDVIRRLEASESTWPSRKDVVSCAAVCKAWREMCK.

Belongs to the TUB family. In terms of tissue distribution, ubiquitous.

The chain is Tubby-like F-box protein 8 (TULP8) from Oryza sativa subsp. japonica (Rice).